A 295-amino-acid chain; its full sequence is Fructose-bisphosphate aldolase class 1 (295 aa).

Glu176 serves as the catalytic Proton acceptor. Catalysis depends on Lys213, which acts as the Schiff-base intermediate with dihydroxyacetone-P.

Belongs to the class I fructose-bisphosphate aldolase family.

It carries out the reaction beta-D-fructose 1,6-bisphosphate = D-glyceraldehyde 3-phosphate + dihydroxyacetone phosphate. The protein operates within carbohydrate degradation; glycolysis; D-glyceraldehyde 3-phosphate and glycerone phosphate from D-glucose: step 4/4. The chain is Fructose-bisphosphate aldolase class 1 from Fusobacterium nucleatum subsp. nucleatum (strain ATCC 25586 / DSM 15643 / BCRC 10681 / CIP 101130 / JCM 8532 / KCTC 2640 / LMG 13131 / VPI 4355).